We begin with the raw amino-acid sequence, 242 residues long: tRNA (guanine-N(1)-)-methyltransferase (242 aa).

S-adenosyl-L-methionine contacts are provided by residues glycine 113 and isoleucine 133–leucine 138.

The protein belongs to the RNA methyltransferase TrmD family. In terms of assembly, homodimer.

It localises to the cytoplasm. The enzyme catalyses guanosine(37) in tRNA + S-adenosyl-L-methionine = N(1)-methylguanosine(37) in tRNA + S-adenosyl-L-homocysteine + H(+). In terms of biological role, specifically methylates guanosine-37 in various tRNAs. The chain is tRNA (guanine-N(1)-)-methyltransferase from Shewanella sediminis (strain HAW-EB3).